The following is a 505-amino-acid chain: Probable cytosol aminopeptidase (505 aa).

The Mn(2+) site is built by Lys269 and Asp274. Residue Lys281 is part of the active site. Asp292, Asp351, and Glu353 together coordinate Mn(2+). Residue Arg355 is part of the active site.

It belongs to the peptidase M17 family. It depends on Mn(2+) as a cofactor.

The protein resides in the cytoplasm. The catalysed reaction is Release of an N-terminal amino acid, Xaa-|-Yaa-, in which Xaa is preferably Leu, but may be other amino acids including Pro although not Arg or Lys, and Yaa may be Pro. Amino acid amides and methyl esters are also readily hydrolyzed, but rates on arylamides are exceedingly low.. It carries out the reaction Release of an N-terminal amino acid, preferentially leucine, but not glutamic or aspartic acids.. Its function is as follows. Presumably involved in the processing and regular turnover of intracellular proteins. Catalyzes the removal of unsubstituted N-terminal amino acids from various peptides. The protein is Probable cytosol aminopeptidase of Rhodococcus jostii (strain RHA1).